Consider the following 699-residue polypeptide: Serine/threonine-protein kinase PRR2 (699 aa).

The tract at residues 168 to 193 (SSTKKNLANDISDNKHNNNSSNTIGH) is disordered. A compositionally biased stretch (polar residues) spans 184–193 (NNNSSNTIGH). The Protein kinase domain occupies 361–653 (RDLDVVLGEG…INGILQDGWI (293 aa)). Residues 367-375 (LGEGSGGKV) and lysine 390 each bind ATP. Aspartate 484 (proton acceptor) is an active-site residue.

It belongs to the protein kinase superfamily. Ser/Thr protein kinase family.

It carries out the reaction L-seryl-[protein] + ATP = O-phospho-L-seryl-[protein] + ADP + H(+). The enzyme catalyses L-threonyl-[protein] + ATP = O-phospho-L-threonyl-[protein] + ADP + H(+). In terms of biological role, protein kinase that functions as a regulator in the pheromone-induced mating pathway downstream of mitogen-activated protein kinase (MAPK) FUS3. Diminishes transcriptional induction of genes in response to pheromone signaling. In Saccharomyces cerevisiae (strain ATCC 204508 / S288c) (Baker's yeast), this protein is Serine/threonine-protein kinase PRR2 (PRR2).